Reading from the N-terminus, the 418-residue chain is Probable carboxypeptidase AFLA_000940 (418 aa).

The signal sequence occupies residues 1 to 18 (MKATDLFHVTVLVAGALA). N-linked (GlcNAc...) asparagine glycosylation occurs at Asn-74. Asp-147 contributes to the Zn(2+) binding site. Asn-168 carries an N-linked (GlcNAc...) asparagine glycan. The active-site Proton acceptor is Glu-179. Residue Glu-180 participates in Zn(2+) binding.

The protein belongs to the peptidase M20A family. It depends on Zn(2+) as a cofactor.

The protein resides in the secreted. The sequence is that of Probable carboxypeptidase AFLA_000940 from Aspergillus flavus (strain ATCC 200026 / FGSC A1120 / IAM 13836 / NRRL 3357 / JCM 12722 / SRRC 167).